Consider the following 59-residue polypeptide: Protein translocase subunit SecE (59 aa).

The helical transmembrane segment at 35 to 55 (IVAIGIAIIGVVGFIIVLIGE) threads the bilayer.

Belongs to the SecE/SEC61-gamma family. Component of the Sec protein translocase complex. Heterotrimer consisting of SecY (alpha), SecG (beta) and SecE (gamma) subunits. The heterotrimers can form oligomers, although 1 heterotrimer is thought to be able to translocate proteins. Interacts with the ribosome. May interact with SecDF, and other proteins may be involved.

The protein resides in the cell membrane. Essential subunit of the Sec protein translocation channel SecYEG. Clamps together the 2 halves of SecY. May contact the channel plug during translocation. In Methanobrevibacter smithii (strain ATCC 35061 / DSM 861 / OCM 144 / PS), this protein is Protein translocase subunit SecE.